The chain runs to 295 residues: Indole-3-glycerol phosphate synthase (295 aa).

This sequence belongs to the TrpC family.

It catalyses the reaction 1-(2-carboxyphenylamino)-1-deoxy-D-ribulose 5-phosphate + H(+) = (1S,2R)-1-C-(indol-3-yl)glycerol 3-phosphate + CO2 + H2O. Its pathway is amino-acid biosynthesis; L-tryptophan biosynthesis; L-tryptophan from chorismate: step 4/5. This is Indole-3-glycerol phosphate synthase from Prochlorococcus marinus (strain MIT 9215).